Here is a 276-residue protein sequence, read N- to C-terminus: Ribosomal RNA large subunit methyltransferase E (276 aa).

S-adenosyl-L-methionine-binding residues include glycine 52, phenylalanine 54, aspartate 72, aspartate 90, and aspartate 114. Lysine 154 acts as the Proton acceptor in catalysis. Over residues 203–249 (RAAPTANATPTPTSTSTSTPTSTSTPTSTSTSTPAPTLTQTQTQTPK) the composition is skewed to low complexity. Residues 203–276 (RAAPTANATP…AKTGASRRTR (74 aa)) are disordered. Basic residues predominate over residues 265–276 (AKAKTGASRRTR).

It belongs to the class I-like SAM-binding methyltransferase superfamily. RNA methyltransferase RlmE family.

The protein localises to the cytoplasm. It carries out the reaction uridine(2552) in 23S rRNA + S-adenosyl-L-methionine = 2'-O-methyluridine(2552) in 23S rRNA + S-adenosyl-L-homocysteine + H(+). Its function is as follows. Specifically methylates the uridine in position 2552 of 23S rRNA at the 2'-O position of the ribose in the fully assembled 50S ribosomal subunit. The protein is Ribosomal RNA large subunit methyltransferase E of Anaeromyxobacter sp. (strain Fw109-5).